Consider the following 196-residue polypeptide: Imidazoleglycerol-phosphate dehydratase (196 aa).

Belongs to the imidazoleglycerol-phosphate dehydratase family.

The protein localises to the cytoplasm. The enzyme catalyses D-erythro-1-(imidazol-4-yl)glycerol 3-phosphate = 3-(imidazol-4-yl)-2-oxopropyl phosphate + H2O. It functions in the pathway amino-acid biosynthesis; L-histidine biosynthesis; L-histidine from 5-phospho-alpha-D-ribose 1-diphosphate: step 6/9. The polypeptide is Imidazoleglycerol-phosphate dehydratase (Akkermansia muciniphila (strain ATCC BAA-835 / DSM 22959 / JCM 33894 / BCRC 81048 / CCUG 64013 / CIP 107961 / Muc)).